We begin with the raw amino-acid sequence, 162 residues long: UPF0114 protein Pput_0713 (162 aa).

The next 4 membrane-spanning stretches (helical) occupy residues 15–35 (LLAPIYFGLSLGLLALALKFF), 53–73 (LILVILSLIDMSLVGGLLVMV), 109–126 (VAASIVAISSIHLLRVFM), and 136–156 (LMWYVIIHMTFVVSAFCMGYL).

Belongs to the UPF0114 family.

It is found in the cell membrane. The protein is UPF0114 protein Pput_0713 of Pseudomonas putida (strain ATCC 700007 / DSM 6899 / JCM 31910 / BCRC 17059 / LMG 24140 / F1).